A 427-amino-acid polypeptide reads, in one-letter code: uncharacterized protein (427 aa).

The protein belongs to the MG032/MG096/MG288 family.

This is an uncharacterized protein from Mycoplasma pneumoniae (strain ATCC 29342 / M129 / Subtype 1) (Mycoplasmoides pneumoniae).